The sequence spans 341 residues: Antihemorrhagic factor BJ46a (341 aa).

A signal peptide spans 1 to 19; it reads MNSLVALVLLGQIIGSTLS. Cystatin fetuin-A-type domains follow at residues 22-130 and 141-254; these read VRGD…AKCH and RNCP…SDCV. Residues 23–25 carry the Cell attachment site motif; that stretch reads RGD. 6 disulfides stabilise this stretch: Cys28–Cys332, Cys85–Cys96, Cys110–Cys129, Cys143–Cys146, Cys205–Cys217, and Cys230–Cys253. Asn95 is a glycosylation site (N-linked (GlcNAc...) asparagine). N-linked (GlcNAc...) asparagine glycosylation is present at Asn204. Residues Asn282 and Asn293 are each glycosylated (N-linked (GlcNAc...) asparagine).

In terms of assembly, homodimer. Expressed by the liver.

It is found in the secreted. Potent inhibitor of hemorrhagic activity but also proteolytic activities of atrolysin C and jararhagin. Inhibition occurs by formation of a non-covalent complex between BJ46a and the proteinases at their metalloproteinase domains. The sequence is that of Antihemorrhagic factor BJ46a from Bothrops jararaca (Jararaca).